The following is a 27-amino-acid chain: Protamine-B (27 aa).

The segment at 1–27 (ARRRRRSSRPQRRRRRRRHGRRRRGRR) is disordered.

As to expression, testis.

It is found in the nucleus. It localises to the chromosome. Protamines substitute for histones in the chromatin of sperm during the haploid phase of spermatogenesis. They compact sperm DNA into a highly condensed, stable and inactive complex. This chain is Protamine-B, found in Acipenser stellatus (Sevruga).